We begin with the raw amino-acid sequence, 789 residues long: Probable phosphoketolase (789 aa).

It belongs to the XFP family. It depends on thiamine diphosphate as a cofactor.

In Brucella abortus (strain 2308), this protein is Probable phosphoketolase.